The sequence spans 88 residues: Small ribosomal subunit protein uS17 (88 aa).

Belongs to the universal ribosomal protein uS17 family. In terms of assembly, part of the 30S ribosomal subunit.

One of the primary rRNA binding proteins, it binds specifically to the 5'-end of 16S ribosomal RNA. The protein is Small ribosomal subunit protein uS17 of Brevibacillus brevis (strain 47 / JCM 6285 / NBRC 100599).